Reading from the N-terminus, the 72-residue chain is Large ribosomal subunit protein bL31 (72 aa).

Residues Cys16, Cys18, Cys38, and Cys41 each coordinate Zn(2+).

It belongs to the bacterial ribosomal protein bL31 family. Type A subfamily. As to quaternary structure, part of the 50S ribosomal subunit. The cofactor is Zn(2+).

In terms of biological role, binds the 23S rRNA. The polypeptide is Large ribosomal subunit protein bL31 (Vibrio campbellii (strain ATCC BAA-1116)).